Reading from the N-terminus, the 360-residue chain is Phospho-N-acetylmuramoyl-pentapeptide-transferase (360 aa).

Helical transmembrane passes span 26-46, 72-92, 94-114, 132-152, 168-188, 199-219, 236-256, 263-283, 288-308, and 338-358; these read AIVS…RLIA, PTMG…LWAY, SNPY…VGFV, WKYF…YITG, VMPQ…VGTG, GLAI…AWAT, AGEL…FLWF, VFMG…IAVL, FLLV…ILQV, and VIVR…ATLK.

The protein belongs to the glycosyltransferase 4 family. MraY subfamily. Mg(2+) serves as cofactor.

Its subcellular location is the cell inner membrane. The enzyme catalyses UDP-N-acetyl-alpha-D-muramoyl-L-alanyl-gamma-D-glutamyl-meso-2,6-diaminopimeloyl-D-alanyl-D-alanine + di-trans,octa-cis-undecaprenyl phosphate = di-trans,octa-cis-undecaprenyl diphospho-N-acetyl-alpha-D-muramoyl-L-alanyl-D-glutamyl-meso-2,6-diaminopimeloyl-D-alanyl-D-alanine + UMP. It participates in cell wall biogenesis; peptidoglycan biosynthesis. Catalyzes the initial step of the lipid cycle reactions in the biosynthesis of the cell wall peptidoglycan: transfers peptidoglycan precursor phospho-MurNAc-pentapeptide from UDP-MurNAc-pentapeptide onto the lipid carrier undecaprenyl phosphate, yielding undecaprenyl-pyrophosphoryl-MurNAc-pentapeptide, known as lipid I. The polypeptide is Phospho-N-acetylmuramoyl-pentapeptide-transferase (Cronobacter sakazakii (strain ATCC BAA-894) (Enterobacter sakazakii)).